Here is a 241-residue protein sequence, read N- to C-terminus: Prolactin-8A8 (241 aa).

The N-terminal stretch at 1–30 (MELQFRQPHFSDALLLLLLSNLLLWEKASS) is a signal peptide. 3 disulfide bridges follow: cysteine 34–cysteine 41, cysteine 101–cysteine 217, and cysteine 234–cysteine 241. Asparagine 213 is a glycosylation site (N-linked (GlcNAc...) asparagine).

Belongs to the somatotropin/prolactin family. Expressed specifically in the placenta. Predominantly expressed in spongiotrophoblast cells.

It is found in the secreted. The chain is Prolactin-8A8 (Prl8a8) from Mus musculus (Mouse).